Consider the following 211-residue polypeptide: Endo-1,4-beta-xylanase 4 (211 aa).

The signal sequence occupies residues methionine 1 to alanine 16. The 192-residue stretch at valine 19–serine 210 folds into the GH11 domain. Asparagine 101 carries an N-linked (GlcNAc...) asparagine glycan. Glutamate 106 functions as the Nucleophile in the catalytic mechanism. Glutamate 197 acts as the Proton donor in catalysis.

This sequence belongs to the glycosyl hydrolase 11 (cellulase G) family.

Its subcellular location is the secreted. It carries out the reaction Endohydrolysis of (1-&gt;4)-beta-D-xylosidic linkages in xylans.. The protein operates within glycan degradation; xylan degradation. Endo-1,4-beta-xylanase involved in the hydrolysis of xylan, a major structural heterogeneous polysaccharide found in plant biomass representing the second most abundant polysaccharide in the biosphere, after cellulose. The protein is Endo-1,4-beta-xylanase 4 (XYN4) of Aspergillus niger.